The following is a 645-amino-acid chain: Translation factor GUF1 homolog, mitochondrial (645 aa).

Residues 40-215 (DKIRNFGIVA…AIIDRVPAPT (176 aa)) form the tr-type G domain. Residues 49-56 (AHVDHGKS), 108-112 (DTPGH), and 162-165 (NKID) each bind GTP.

It belongs to the TRAFAC class translation factor GTPase superfamily. Classic translation factor GTPase family. LepA subfamily.

It localises to the mitochondrion inner membrane. The enzyme catalyses GTP + H2O = GDP + phosphate + H(+). Promotes mitochondrial protein synthesis. May act as a fidelity factor of the translation reaction, by catalyzing a one-codon backward translocation of tRNAs on improperly translocated ribosomes. Binds to mitochondrial ribosomes in a GTP-dependent manner. This chain is Translation factor GUF1 homolog, mitochondrial, found in Caenorhabditis elegans.